A 122-amino-acid polypeptide reads, in one-letter code: Large ribosomal subunit protein uL14 (122 aa).

Belongs to the universal ribosomal protein uL14 family. Part of the 50S ribosomal subunit. Forms a cluster with proteins L3 and L19. In the 70S ribosome, L14 and L19 interact and together make contacts with the 16S rRNA in bridges B5 and B8.

Its function is as follows. Binds to 23S rRNA. Forms part of two intersubunit bridges in the 70S ribosome. The polypeptide is Large ribosomal subunit protein uL14 (Helicobacter hepaticus (strain ATCC 51449 / 3B1)).